Consider the following 145-residue polypeptide: UI (145 aa).

Residues 1–22 form the signal peptide; sequence MKPVPLVLLITSVLLTTHIPLS. Residue V143 is modified to Valine amide.

Belongs to the sauvagine/corticotropin-releasing factor/urotensin I family.

It is found in the secreted. Urotensin is found in the teleost caudal neurosecretory system. It has a suggested role in osmoregulation and as a corticotropin-releasing factor. The non-hormonal portion of this precursor may be a urotensin binding protein, urophysin. The protein is UI of Carassius auratus (Goldfish).